Reading from the N-terminus, the 157-residue chain is Peptide methionine sulfoxide reductase MsrA (157 aa).

Cys10 is an active-site residue.

This sequence belongs to the MsrA Met sulfoxide reductase family.

The catalysed reaction is L-methionyl-[protein] + [thioredoxin]-disulfide + H2O = L-methionyl-(S)-S-oxide-[protein] + [thioredoxin]-dithiol. It carries out the reaction [thioredoxin]-disulfide + L-methionine + H2O = L-methionine (S)-S-oxide + [thioredoxin]-dithiol. Has an important function as a repair enzyme for proteins that have been inactivated by oxidation. Catalyzes the reversible oxidation-reduction of methionine sulfoxide in proteins to methionine. The chain is Peptide methionine sulfoxide reductase MsrA from Clostridium botulinum (strain Okra / Type B1).